A 770-amino-acid chain; its full sequence is Endothelin-converting enzyme 1 (770 aa).

At 1-68 (MRGVWPPPVS…WAARTQVEKR (68 aa)) the chain is on the cytoplasmic side. Residue Thr25 is modified to Phosphothreonine. Residues 69 to 89 (LVVLVVLLAAGLVACLAALGI) form a helical; Signal-anchor for type II membrane protein membrane-spanning segment. The Extracellular segment spans residues 90 to 770 (QYQTRSPSVC…MNPPHKCEVW (681 aa)). Positions 98–770 (VCLSEACVSV…MNPPHKCEVW (673 aa)) constitute a Peptidase M13 domain. Cystine bridges form between Cys99-Cys104, Cys122-Cys755, Cys130-Cys715, Cys185-Cys435, and Cys644-Cys767. 8 N-linked (GlcNAc...) asparagine glycosylation sites follow: Asn166, Asn187, Asn210, Asn270, Asn316, Asn362, Asn383, and Asn539. His607 contributes to the Zn(2+) binding site. Residue Glu608 is part of the active site. A Zn(2+)-binding site is contributed by His611. N-linked (GlcNAc...) asparagine glycans are attached at residues Asn632 and Asn651. Glu667 lines the Zn(2+) pocket. The active-site Proton donor is Asp671.

It belongs to the peptidase M13 family. As to quaternary structure, homodimer; disulfide-linked. Interacts with PPP1R16B. Interacts with TSPAN8; this interaction recruits the endothelin converting enzyme ECE1 to tetraspanin-enriched microdomains and positively modulates its enzymatic activity. The cofactor is Zn(2+). All isoforms are expressed in umbilical vein endothelial cells, polynuclear neutrophils, fibroblasts, atrium cardiomyocytes and ventricles. Isoforms A, B and C are also expressed in placenta, lung, heart, adrenal gland and phaeochromocytoma; isoforms A and C in liver, testis and small intestine; isoform B, C and D in endothelial cells and umbilical vein smooth muscle cells; isoforms C and D in saphenous vein cells, and isoform C in kidney.

It is found in the cell membrane. The enzyme catalyses Hydrolysis of the 21-Trp-|-Val-22 bond in big endothelin to form endothelin 1.. With respect to regulation, inhibited by phosphoramidon. Activated by K49-P1-20, a twenty-residue synthetic peptide shortened from the snake B.asper myotoxin II. Converts big endothelin-1 to endothelin-1. The protein is Endothelin-converting enzyme 1 (ECE1) of Homo sapiens (Human).